The primary structure comprises 768 residues: Mitochondrial 15S rRNA processing factor CCM1 (768 aa).

Residues 1–90 constitute a mitochondrion transit peptide; the sequence is MIRLIRWNNV…RSFTKVIAQH (90 aa). 2 disordered regions span residues 28 to 65 and 90 to 114; these read NKRKRRIPPSKPRSSNRKDGDIEPYRMTDQNQTPNTGS and HLKPEQENDSLTSAEKPDTSQLPPI. Residues 43-53 are compositionally biased toward basic and acidic residues; sequence NRKDGDIEPYR. Polar residues predominate over residues 55–65; the sequence is TDQNQTPNTGS. PPR repeat units lie at residues 274–308, 309–344, 347–381, 382–417, and 418–452; these read KIDHYETMILAYVKNNHMEKIDGILAQMKKKNIEI, SKMIYTSIVRGYIFYQKDHQRALDTFDSMKFLSQKT, DEKVYTDVIVSCVMHREIERALDLYYELKDKGMNV, NQNLLSTLAKGCSRSKQFKTQAWNFLFQVYDHGWVP, and NLQTYEHMLYIAARDGDVELTRVLFYKMLQTNSVT. The segment covering 583–596 has biased composition (basic and acidic residues); that stretch reads IEPRQDEPTEKATT. The tract at residues 583–609 is disordered; sequence IEPRQDEPTEKATTTEEQNASSETDNN. The span at 597 to 609 shows a compositional bias: polar residues; the sequence is TEEQNASSETDNN. A PPR 6 repeat occupies 634–664; the sequence is DSYLYNLAIKAAGKFKNYGFAQEILHERGQF.

Belongs to the CCM1 family. As to quaternary structure, binds to mitochondrial small subunit 15S rRNA.

It is found in the mitochondrion. In terms of biological role, regulates mitochondrial small subunit maturation by controlling 15S rRNA 5'-end processing. Localizes to the 5' precursor of the 15S rRNA in a position that is subsequently occupied by mS47 in the mature yeast mtSSU. Uses structure and sequence-specific RNA recognition, binding to a single-stranded region of the precursor and specifically recognizing bases -6 to -1. The exchange of Ccm1 for mS47 is coupled to the irreversible removal of precursor rRNA that is accompanied by conformational changes of the mitoribosomal proteins uS5m and mS26. These conformational changes signal completion of 5'-end rRNA processing through protection of the mature 5'-end of the 15S rRNA and stabilization of mS47. The removal of the 5' precursor together with the dissociation of Ccm1 may be catalyzed by the 5'-3' exoribonuclease Pet127. Involved in the specific removal of group I introns in mitochondrial encoded transcripts. This Candida albicans (strain SC5314 / ATCC MYA-2876) (Yeast) protein is Mitochondrial 15S rRNA processing factor CCM1 (CCM1).